A 392-amino-acid polypeptide reads, in one-letter code: Lipid-A-disaccharide synthase (392 aa).

It belongs to the LpxB family.

It carries out the reaction a lipid X + a UDP-2-N,3-O-bis[(3R)-3-hydroxyacyl]-alpha-D-glucosamine = a lipid A disaccharide + UDP + H(+). It functions in the pathway bacterial outer membrane biogenesis; LPS lipid A biosynthesis. In terms of biological role, condensation of UDP-2,3-diacylglucosamine and 2,3-diacylglucosamine-1-phosphate to form lipid A disaccharide, a precursor of lipid A, a phosphorylated glycolipid that anchors the lipopolysaccharide to the outer membrane of the cell. The chain is Lipid-A-disaccharide synthase from Bradyrhizobium diazoefficiens (strain JCM 10833 / BCRC 13528 / IAM 13628 / NBRC 14792 / USDA 110).